We begin with the raw amino-acid sequence, 433 residues long: Keratin, type I cytoskeletal 17 (433 aa).

A disordered region spans residues M1–S24. Positions M1–G83 are head. S12 and S13 each carry phosphoserine. K15 is covalently cross-linked (Glycyl lysine isopeptide (Lys-Gly) (interchain with G-Cter in SUMO1); alternate). Residue K15 forms a Glycyl lysine isopeptide (Lys-Gly) (interchain with G-Cter in SUMO2); alternate linkage. 4 positions are modified to phosphoserine: S25, S32, S34, and S39. S44 carries the post-translational modification Phosphoserine; by RPS6KA1. The segment at E84–Y120 is coil 1A. Positions E84 to L395 constitute an IF rod domain. T110 carries the post-translational modification Phosphothreonine. The segment at Q121–I138 is linker 1. Positions E139–R230 are coil 1B. The interval G231–S250 is linker 12. The segment at R251 to D392 is coil 2. K278 is covalently cross-linked (Glycyl lysine isopeptide (Lys-Gly) (interchain with G-Cter in SUMO2)). T279 bears the Phosphothreonine mark. S323 is modified (phosphoserine). Positions A393 to R433 are tail. Residues K399, K401, and K420 each participate in a glycyl lysine isopeptide (Lys-Gly) (interchain with G-Cter in SUMO1); alternate cross-link. Residues K399, K401, and K420 each participate in a glycyl lysine isopeptide (Lys-Gly) (interchain with G-Cter in SUMO2); alternate cross-link.

This sequence belongs to the intermediate filament family. In terms of assembly, heterodimer of a type I and a type II keratin. KRT17 associates with KRT6 isomers (KRT6A or KRT6B). Interacts with TRADD and SFN. In terms of processing, phosphorylation at Ser-44 occurs in a growth- and stress-dependent fashion in skin keratinocytes, it has no effect on filament organization.

The protein localises to the cytoplasm. Its function is as follows. Type I keratin involved in the formation and maintenance of various skin appendages, specifically in determining shape and orientation of hair. Required for the correct growth of hair follicles, in particular for the persistence of the anagen (growth) state. Modulates the function of TNF-alpha in the specific context of hair cycling. Regulates protein synthesis and epithelial cell growth through binding to the adapter protein SFN and by stimulating Akt/mTOR pathway. Involved in tissue repair. May be a marker of basal cell differentiation in complex epithelia and therefore indicative of a certain type of epithelial 'stem cells'. Acts as a promoter of epithelial proliferation by acting a regulator of immune response in skin: promotes Th1/Th17-dominated immune environment contributing to the development of basaloid skin tumors. May act as an autoantigen in the immunopathogenesis of psoriasis, with certain peptide regions being a major target for autoreactive T-cells and hence causing their proliferation. The chain is Keratin, type I cytoskeletal 17 from Rattus norvegicus (Rat).